The sequence spans 317 residues: ATP synthase gamma chain (317 aa).

The protein belongs to the ATPase gamma chain family. As to quaternary structure, F-type ATPases have 2 components, CF(1) - the catalytic core - and CF(0) - the membrane proton channel. CF(1) has five subunits: alpha(3), beta(3), gamma(1), delta(1), epsilon(1). CF(0) has three main subunits: a, b and c.

It is found in the cellular thylakoid membrane. Its function is as follows. Produces ATP from ADP in the presence of a proton gradient across the membrane. The gamma chain is believed to be important in regulating ATPase activity and the flow of protons through the CF(0) complex. In Synechococcus sp. (strain CC9902), this protein is ATP synthase gamma chain.